Reading from the N-terminus, the 327-residue chain is Transaldolase (327 aa).

The active-site Schiff-base intermediate with substrate is Lys132.

It belongs to the transaldolase family. Type 1 subfamily. In terms of assembly, homodimer.

The protein resides in the cytoplasm. It catalyses the reaction D-sedoheptulose 7-phosphate + D-glyceraldehyde 3-phosphate = D-erythrose 4-phosphate + beta-D-fructose 6-phosphate. It participates in carbohydrate degradation; pentose phosphate pathway; D-glyceraldehyde 3-phosphate and beta-D-fructose 6-phosphate from D-ribose 5-phosphate and D-xylulose 5-phosphate (non-oxidative stage): step 2/3. Functionally, transaldolase is important for the balance of metabolites in the pentose-phosphate pathway. This is Transaldolase from Chlamydia caviae (strain ATCC VR-813 / DSM 19441 / 03DC25 / GPIC) (Chlamydophila caviae).